The chain runs to 443 residues: Cyclic AMP receptor 4 (443 aa).

At 1 to 11 the chain is on the extracellular side; it reads MKVLQEINLTY. Residue Asn-8 is glycosylated (N-linked (GlcNAc...) asparagine). A helical membrane pass occupies residues 12–32; that stretch reads SILVIADFSSIFGCLLVLIAF. Residues 33-44 are Cytoplasmic-facing; sequence KKLKLLRNHITR. Residues 45–65 form a helical membrane-spanning segment; the sequence is VIACFCVSSLLKDIISTGLTL. Topologically, residues 66–89 are extracellular; it reads SLGPQNEAGSTSFQCYLYAITITY. The chain crosses the membrane as a helical span at residues 90–110; the sequence is GSLACWLWTLCLAFSIYNLIV. The Cytoplasmic portion of the chain corresponds to 111-119; it reads KREPEPEKY. Residues 120–140 traverse the membrane as a helical segment; sequence EKFYHGVCWTIPLICVIVMLA. At 141–161 the chain is on the extracellular side; that stretch reads KKTIEPVGNWCWISEKYVGYR. The chain crosses the membrane as a helical span at residues 162-182; that stretch reads FGLFYGPFFAIWIISAVLVGL. Residues 183–208 are Cytoplasmic-facing; the sequence is TSRYTYSVIRNSVSDNKDKHMTYQFK. Residues 209-229 traverse the membrane as a helical segment; the sequence is LINYIIVFLLCWVFAIVNRIL. At 230-263 the chain is on the extracellular side; sequence NGLGYYPTLPNILHTYFSVSHGFFASVTFIYNNP. The chain crosses the membrane as a helical span at residues 264-284; that stretch reads LMWRYWGSKIFLIFAKFGYFV. The Cytoplasmic segment spans residues 285-443; sequence ELQRRLDRNK…DEREKKDNKF (159 aa). 2 disordered regions span residues 325–354 and 396–443; these read NDISNDNQQQQQQQQTPQQPQQQFQQQQSP and SFEI…DNKF. The span at 332 to 352 shows a compositional bias: low complexity; that stretch reads QQQQQQQQTPQQPQQQFQQQQ. Positions 396 to 410 are enriched in polar residues; it reads SFEITQPSNDLNTIE. Positions 411 to 425 are enriched in low complexity; sequence NNNNYNNNNNNNNNN. The segment covering 429 to 443 has biased composition (basic and acidic residues); the sequence is IEKEKDEREKKDNKF.

Belongs to the G-protein coupled receptor 5 family. C-terminal Ser or Thr residues may be phosphorylated.

The protein resides in the membrane. Receptor for cAMP. Regulates axial patterning and cellular differentiation during late development. The activity of this receptor is mediated by G proteins. This Dictyostelium discoideum (Social amoeba) protein is Cyclic AMP receptor 4 (carD).